A 343-amino-acid polypeptide reads, in one-letter code: Heat-inducible transcription repressor HrcA (343 aa).

The protein belongs to the HrcA family.

Negative regulator of class I heat shock genes (grpE-dnaK-dnaJ and groELS operons). Prevents heat-shock induction of these operons. This chain is Heat-inducible transcription repressor HrcA, found in Caldanaerobacter subterraneus subsp. tengcongensis (strain DSM 15242 / JCM 11007 / NBRC 100824 / MB4) (Thermoanaerobacter tengcongensis).